Here is a 1029-residue protein sequence, read N- to C-terminus: Protein translocase subunit SecA (1029 aa).

ATP is bound by residues Gln-143, 161-165, and Asp-661; that span reads GEGKT. The disordered stretch occupies residues 953 to 1029; it reads EQEQKKSQVQ…GKKYKNCCGK (77 aa). Basic and acidic residues-rich tracts occupy residues 966-975 and 984-996; these read LVARHEKAET and PEGRQEKKAENGK. The Zn(2+) site is built by Cys-1015, Cys-1017, Cys-1026, and Cys-1027.

This sequence belongs to the SecA family. Monomer and homodimer. Part of the essential Sec protein translocation apparatus which comprises SecA, SecYEG and auxiliary proteins SecDF. Other proteins may also be involved. Zn(2+) serves as cofactor.

It localises to the cell inner membrane. Its subcellular location is the cytoplasm. The catalysed reaction is ATP + H2O + cellular proteinSide 1 = ADP + phosphate + cellular proteinSide 2.. In terms of biological role, part of the Sec protein translocase complex. Interacts with the SecYEG preprotein conducting channel. Has a central role in coupling the hydrolysis of ATP to the transfer of proteins into and across the cell membrane, serving as an ATP-driven molecular motor driving the stepwise translocation of polypeptide chains across the membrane. The sequence is that of Protein translocase subunit SecA from Chlorobium phaeobacteroides (strain BS1).